The following is a 569-amino-acid chain: Sugar transporter STL1 (569 aa).

The Cytoplasmic segment spans residues 1-29; it reads MKDLKLSNFKGKFISRTSHWGLTGKKLRY. The chain crosses the membrane as a helical span at residues 30-50; the sequence is FITIASMTGFSLFGYDQGLMA. The Extracellular segment spans residues 51–79; that stretch reads SLITGKQFNYEFPATKENGDHDRHATVVQ. Residues 80-100 form a helical membrane-spanning segment; it reads GATTSCYELGCFAGSLFVMFC. Residues 101–107 are Cytoplasmic-facing; sequence GERIGRK. Residues 108 to 128 traverse the membrane as a helical segment; it reads PLILMGSVITIIGAVISTCAF. Residue R129 is a topological domain, extracellular. The chain crosses the membrane as a helical span at residues 130–150; sequence GYWALGQFIIGRVVTGVGTGL. The Cytoplasmic portion of the chain corresponds to 151–168; sequence NTSTIPVWQSEMSKAENR. The helical transmembrane segment at 169–189 threads the bilayer; sequence GLLVNLEGSTIAFGTMIAYWI. Topologically, residues 190–203 are extracellular; the sequence is DFGLSYTNSSVQWR. N197 carries an N-linked (GlcNAc...) asparagine glycan. A helical membrane pass occupies residues 204–224; sequence FPVSMQIVFALFLLAFMIKLP. The Cytoplasmic segment spans residues 225–291; the sequence is ESPRWLISQS…SRGRSQNLQR (67 aa). A helical membrane pass occupies residues 292–312; it reads ALIAASTQFFQQFTGCNAAIY. Residues 313–330 lie on the Extracellular side of the membrane; that stretch reads YSTVLFNKTIKLDYRLSM. A glycan (N-linked (GlcNAc...) asparagine) is linked at N319. Residues 331–351 form a helical membrane-spanning segment; that stretch reads IIGGVFATIYALSTIGSFFLI. Topologically, residues 352 to 358 are cytoplasmic; the sequence is EKLGRRK. Residues 359–379 form a helical membrane-spanning segment; the sequence is LFLLGATGQAVSFTITFACLV. Residues 380-389 are Extracellular-facing; the sequence is KENKENARGA. The chain crosses the membrane as a helical span at residues 390-410; that stretch reads AVGLFLFITFFGLSLLSLPWI. Over 411–426 the chain is Cytoplasmic; that stretch reads YPPEIASMKVRASTNA. A helical transmembrane segment spans residues 427-447; that stretch reads FSTCTNWLCNFAVVMFTPIFI. Topologically, residues 448–453 are extracellular; that stretch reads GQSGWG. Residues 454–474 form a helical membrane-spanning segment; that stretch reads CYLFFAVMNYLYIPVIFFFYP. The Cytoplasmic segment spans residues 475–569; sequence ETAGRSLEEI…TVNDKANFEG (95 aa). Residues 524 to 533 show a composition bias toward acidic residues; the sequence is DDEMEKEDFG. Residues 524 to 569 form a disordered region; that stretch reads DDEMEKEDFGEDRVEDTYNQINGDNSSSSSNIKNEDTVNDKANFEG. Over residues 556–569 the composition is skewed to basic and acidic residues; the sequence is KNEDTVNDKANFEG.

Belongs to the major facilitator superfamily. Sugar transporter (TC 2.A.1.1) family.

Its subcellular location is the membrane. The chain is Sugar transporter STL1 (STL1) from Saccharomyces cerevisiae (strain ATCC 204508 / S288c) (Baker's yeast).